Here is a 122-residue protein sequence, read N- to C-terminus: Small ribosomal subunit protein uS12 (122 aa).

The protein belongs to the universal ribosomal protein uS12 family. In terms of assembly, part of the 30S ribosomal subunit. Contacts proteins S8 and S17. May interact with IF1 in the 30S initiation complex.

In terms of biological role, with S4 and S5 plays an important role in translational accuracy. Its function is as follows. Interacts with and stabilizes bases of the 16S rRNA that are involved in tRNA selection in the A site and with the mRNA backbone. Located at the interface of the 30S and 50S subunits, it traverses the body of the 30S subunit contacting proteins on the other side and probably holding the rRNA structure together. The combined cluster of proteins S8, S12 and S17 appears to hold together the shoulder and platform of the 30S subunit. In Corynebacterium efficiens (strain DSM 44549 / YS-314 / AJ 12310 / JCM 11189 / NBRC 100395), this protein is Small ribosomal subunit protein uS12.